The sequence spans 258 residues: 5'-nucleotidase SurE (258 aa).

Asp-8, Asp-9, Ser-40, and Asn-93 together coordinate a divalent metal cation.

Belongs to the SurE nucleotidase family. A divalent metal cation is required as a cofactor.

Its subcellular location is the cytoplasm. The enzyme catalyses a ribonucleoside 5'-phosphate + H2O = a ribonucleoside + phosphate. In terms of biological role, nucleotidase that shows phosphatase activity on nucleoside 5'-monophosphates. This chain is 5'-nucleotidase SurE, found in Afipia carboxidovorans (strain ATCC 49405 / DSM 1227 / KCTC 32145 / OM5) (Oligotropha carboxidovorans).